A 635-amino-acid chain; its full sequence is Threonine--tRNA ligase (635 aa).

One can recognise a TGS domain in the interval 1–61; sequence MTVVRLPDGT…EIDSDLVLIT (61 aa). The segment at 242–533 is catalytic; sequence DHRKLGKQLD…LIEHHAGALP (292 aa). Zn(2+) contacts are provided by cysteine 333, histidine 384, and histidine 510.

It belongs to the class-II aminoacyl-tRNA synthetase family. As to quaternary structure, homodimer. Requires Zn(2+) as cofactor.

The protein localises to the cytoplasm. The catalysed reaction is tRNA(Thr) + L-threonine + ATP = L-threonyl-tRNA(Thr) + AMP + diphosphate + H(+). Catalyzes the attachment of threonine to tRNA(Thr) in a two-step reaction: L-threonine is first activated by ATP to form Thr-AMP and then transferred to the acceptor end of tRNA(Thr). Also edits incorrectly charged L-seryl-tRNA(Thr). This is Threonine--tRNA ligase from Nitrosomonas eutropha (strain DSM 101675 / C91 / Nm57).